A 296-amino-acid chain; its full sequence is Transcription factor Pur-alpha 1 (296 aa).

Met-1 carries the post-translational modification N-acetylmethionine. 2 disordered regions span residues Met-1–Gly-25 and Ile-186–Gly-214. Ser-207 carries the post-translational modification Phosphoserine.

It belongs to the PUR DNA-binding protein family. In terms of assembly, homodimer. Interacts with TCP20.

Its subcellular location is the nucleus. Its function is as follows. Transcription factor that specifically binds the purine-rich double-stranded telomeric repeated sequence 5'-AAACCCTAA-3' found in promoter telo boxes. In Arabidopsis thaliana (Mouse-ear cress), this protein is Transcription factor Pur-alpha 1 (PURA1).